Here is a 625-residue protein sequence, read N- to C-terminus: Chaperone protein HtpG (625 aa).

The interval 1 to 337 (MSTNQETRGF…TNDLPLNVSR (337 aa)) is a; substrate-binding. The segment at 338 to 554 (EILQENKITA…NDEMTTQMAK (217 aa)) is b. Positions 555 to 625 (LFAAMGQKAP…FIKRMNKLLG (71 aa)) are c.

The protein belongs to the heat shock protein 90 family. As to quaternary structure, homodimer.

Its subcellular location is the cytoplasm. Its function is as follows. Molecular chaperone. Has ATPase activity. The protein is Chaperone protein HtpG of Actinobacillus pleuropneumoniae serotype 5b (strain L20).